A 416-amino-acid polypeptide reads, in one-letter code: Serine hydroxymethyltransferase (416 aa).

(6S)-5,6,7,8-tetrahydrofolate-binding positions include L121 and 125–127 (GHL). K229 bears the N6-(pyridoxal phosphate)lysine mark.

It belongs to the SHMT family. As to quaternary structure, homodimer. Pyridoxal 5'-phosphate is required as a cofactor.

It is found in the cytoplasm. The enzyme catalyses (6R)-5,10-methylene-5,6,7,8-tetrahydrofolate + glycine + H2O = (6S)-5,6,7,8-tetrahydrofolate + L-serine. The protein operates within one-carbon metabolism; tetrahydrofolate interconversion. It participates in amino-acid biosynthesis; glycine biosynthesis; glycine from L-serine: step 1/1. In terms of biological role, catalyzes the reversible interconversion of serine and glycine with tetrahydrofolate (THF) serving as the one-carbon carrier. This reaction serves as the major source of one-carbon groups required for the biosynthesis of purines, thymidylate, methionine, and other important biomolecules. Also exhibits THF-independent aldolase activity toward beta-hydroxyamino acids, producing glycine and aldehydes, via a retro-aldol mechanism. The chain is Serine hydroxymethyltransferase from Neisseria meningitidis serogroup C / serotype 2a (strain ATCC 700532 / DSM 15464 / FAM18).